The following is a 401-amino-acid chain: Zinc finger CCHC domain-containing protein 12 (401 aa).

Disordered stretches follow at residues Met1–Pro20 and Asp270–Pro292. Acidic residues predominate over residues Asp270 to Asp282. Residues Val345–Asn362 form a CCHC-type zinc finger.

This sequence belongs to the ZCCHC12 family. As to quaternary structure, interacts with SMAD1 and CREB-binding protein (CBP). Forms a protein-DNA complex through its association with SMAD1.

In terms of biological role, transcriptional coactivator in the bone morphogenetic protein (BMP)-signaling pathway. It positively modulates BMP signaling by interacting with SMAD1 and associating with CBP in the transcription complex. It contributes to the BMP-induced enhancement of cholinergic-neuron-specific gene expression. The protein is Zinc finger CCHC domain-containing protein 12 (Zcchc12) of Rattus norvegicus (Rat).